Reading from the N-terminus, the 280-residue chain is F420-dependent methylenetetrahydromethanopterin dehydrogenase (280 aa).

It belongs to the MTD family.

It catalyses the reaction 5,10-methylenetetrahydromethanopterin + oxidized coenzyme F420-(gamma-L-Glu)(n) + 2 H(+) = 5,10-methenyl-5,6,7,8-tetrahydromethanopterin + reduced coenzyme F420-(gamma-L-Glu)(n). It functions in the pathway one-carbon metabolism; methanogenesis from CO(2); 5,10-methylene-5,6,7,8-tetrahydromethanopterin from 5,10-methenyl-5,6,7,8-tetrahydromethanopterin (coenzyme F420 route): step 1/1. Catalyzes the reversible reduction of methenyl-H(4)MPT(+) to methylene-H(4)MPT. This chain is F420-dependent methylenetetrahydromethanopterin dehydrogenase, found in Methanosphaerula palustris (strain ATCC BAA-1556 / DSM 19958 / E1-9c).